The following is a 526-amino-acid chain: Peptide chain release factor 3 (526 aa).

Residues 9 to 277 enclose the tr-type G domain; sequence NKRRTFAIIS…DFVEYAPGPQ (269 aa). GTP-binding positions include 18-25, 86-90, and 140-143; these read SHPDAGKT, DTPGH, and NKLD.

This sequence belongs to the TRAFAC class translation factor GTPase superfamily. Classic translation factor GTPase family. PrfC subfamily.

The protein localises to the cytoplasm. Its function is as follows. Increases the formation of ribosomal termination complexes and stimulates activities of RF-1 and RF-2. It binds guanine nucleotides and has strong preference for UGA stop codons. It may interact directly with the ribosome. The stimulation of RF-1 and RF-2 is significantly reduced by GTP and GDP, but not by GMP. The protein is Peptide chain release factor 3 of Legionella pneumophila (strain Corby).